The primary structure comprises 706 residues: Putative pentatricopeptide repeat-containing protein At3g47840 (706 aa).

16 PPR repeats span residues 39–69, 70–104, 107–141, 142–172, 173–203, 208–242, 243–273, 274–308, 309–343, 344–374, 375–409, 410–444, 445–475, 476–510, 511–541, and 547–577; these read VKFDPNSHLRSLINAGNLRAARQVFDKMPHG, DIVSWTSIIKRYVTANNSDEALILFSAMRVVDHAV, DTSVLSVVLKACGQSSNIAYGESLHAYAVKTSLLS, SVYVGSSLLDMYKRVGKIDKSCRVFSEMPFR, NAVTWTAIITGLVHAGRYKEGLTYFSEMSRS, DTYTFAIALKACAGLRQVKYGKAIHTHVIVRGFVT, TLCVANSLATMYTECGEMQDGLCLFENMSER, DVVSWTSLIVAYKRIGQEVKAVETFIKMRNSQVPP, NEQTFASMFSACASLSRLVWGEQLHCNVLSLGLND, SLSVSNSMMKMYSTCGNLVSASVLFQGMRCR, DIISWSTIIGGYCQAGFGEEGFKYFSWMRQSGTKP, TDFALASLLSVSGNMAVIEGGRQVHALALCFGLEQ, NSTVRSSLINMYSKCGSIKEASMIFGETDRD, DIVSLTAMINGYAEHGKSKEAIDLFEKSLKVGFRP, DSVTFISVLTACTHSGQLDLGFHYFNMMQET, and AKEHYGCMVDLLCRAGRLSDAEKMINEMSWK. The tract at residues 582–657 is type E motif; that stretch reads VWTTLLIACK…EPGWSSIKIK (76 aa). Positions 658–688 are type E(+) motif; sequence DCVSAFVSGDRFHPQSEDIYNILELAVSGAE.

The protein belongs to the PPR family. PCMP-E subfamily.

In Arabidopsis thaliana (Mouse-ear cress), this protein is Putative pentatricopeptide repeat-containing protein At3g47840 (PCMP-E43).